The following is an 88-amino-acid chain: Snakin-1 (88 aa).

Residues 1–25 (MKLFLLTLLLVTLVITPSLIQTTMA) form the signal peptide.

It belongs to the GASA family. In terms of processing, six disulfide bonds may be present. In terms of tissue distribution, expressed in tubers, stems, axillary and young floral buds, sepals, petals, stamens and carpels, but not in roots, stolons, shoot apex meristem or young leaves.

It is found in the secreted. The protein localises to the cell wall. Functionally, has an antimicrobial activity. Causes a rapid aggregation of both Gram-positive and Gram-negative bacteria, but the antimicrobial activity is not correlated with the capacity to aggregate bacteria. In Solanum tuberosum (Potato), this protein is Snakin-1 (SN1).